The sequence spans 154 residues: Myoglobin (154 aa).

The region spanning 2–148 is the Globin domain; that stretch reads GLSDGEWQLV…FRNDMAAKYK (147 aa). Position 4 is a phosphoserine (Ser4). Nitrite is bound at residue His65. His65 is an O2 binding site. Thr68 is modified (phosphothreonine). His94 serves as a coordination point for heme b.

Belongs to the globin family. In terms of assembly, monomeric.

The protein localises to the cytoplasm. The protein resides in the sarcoplasm. The catalysed reaction is Fe(III)-heme b-[protein] + nitric oxide + H2O = Fe(II)-heme b-[protein] + nitrite + 2 H(+). It carries out the reaction H2O2 + AH2 = A + 2 H2O. Its function is as follows. Monomeric heme protein which primary function is to store oxygen and facilitate its diffusion within muscle tissues. Reversibly binds oxygen through a pentacoordinated heme iron and enables its timely and efficient release as needed during periods of heightened demand. Depending on the oxidative conditions of tissues and cells, and in addition to its ability to bind oxygen, it also has a nitrite reductase activity whereby it regulates the production of bioactive nitric oxide. Under stress conditions, like hypoxia and anoxia, it also protects cells against reactive oxygen species thanks to its pseudoperoxidase activity. The chain is Myoglobin (MB) from Sapajus apella (Brown-capped capuchin).